Reading from the N-terminus, the 1000-residue chain is C2 domain-containing protein 5 (1000 aa).

Residues 1–109 (MPGKLKVKIV…EAATVISGWF (109 aa)) enclose the C2 domain. Ca(2+)-binding residues include aspartate 19, aspartate 26, aspartate 76, aspartate 78, serine 81, and aspartate 84. Residue serine 197 is modified to Phosphoserine; by PKB/AKT2. Phosphoserine is present on residues serine 200 and serine 260. The tract at residues 265 to 330 (MKEIPFNEDP…SGSAGKEGGP (66 aa)) is disordered. The segment covering 274-289 (PNPNTHSSGPSTPLKN) has biased composition (polar residues). The span at 290–318 (QTYSFSPSKSYSRQSSSSDTDLSLTPKTG) shows a compositional bias: low complexity. A phosphoserine mark is found at serine 293, serine 295, serine 304, serine 305, and serine 306. Residue threonine 317 is modified to Phosphothreonine. Gly residues predominate over residues 319 to 328 (MGSGSAGKEG). The residue at position 323 (serine 323) is a Phosphoserine. Position 601 is a phosphothreonine (threonine 601). The segment at 639–669 (EIIGSPIPEPRQRSRLLRSQSESSDEVTELD) is disordered. Phosphoserine occurs at positions 643, 657, 659, 661, and 662. Threonine 666 carries the post-translational modification Phosphothreonine. Phosphoserine is present on serine 671. The residue at position 807 (threonine 807) is a Phosphothreonine. 2 positions are modified to phosphoserine: serine 817 and serine 852.

Ca(2+) serves as cofactor. In terms of processing, phosphorylated on Ser-197 by active myristoylated kinase AKT2; insulin-stimulated phosphorylation by AKT2 regulates SLC2A4/GLUT4 translocation into the plasma membrane.

It is found in the cytoplasmic vesicle membrane. Its subcellular location is the cytoplasm. It localises to the cell cortex. The protein localises to the cell membrane. The protein resides in the cell projection. It is found in the ruffle. Its function is as follows. Required for insulin-stimulated glucose transport and glucose transporter SLC2A4/GLUT4 translocation from intracellular glucose storage vesicle (GSV) to the plasma membrane (PM) in adipocytes. Binds phospholipid membranes in a calcium-dependent manner and is necessary for the optimal membrane fusion between SLC2A4/GLUT4 GSV and the PM. This Pongo abelii (Sumatran orangutan) protein is C2 domain-containing protein 5 (C2CD5).